A 1785-amino-acid chain; its full sequence is Brefeldin A-inhibited guanine nucleotide-exchange protein 2 (1785 aa).

An N-acetylmethionine modification is found at Met-1. A DCB; DCB:DCB domain and DCB:HUS domain interaction region spans residues 2–224; sequence QESQTKSMFV…KPQSPVIQAA (223 aa). A phosphoserine mark is found at Ser-214, Ser-218, and Ser-227. The segment at 232 to 285 is disordered; sequence RLKHSQAQSKPTTPEKTDLTNGEHARSDSGKVSTENGDAPRERGSSLSGTDDGA. Position 244 is a phosphothreonine (Thr-244). Positions 244-260 are enriched in basic and acidic residues; the sequence is TPEKTDLTNGEHARSDS. Residues Ser-277, Ser-348, and Ser-349 each carry the phosphoserine modification. The HUS; DCB:HUS domain interaction stretch occupies residues 508–528; sequence ADAQCVVDIYVNYDCDLNAAN. Ser-614 carries the post-translational modification Phosphoserine. A Phosphothreonine modification is found at Thr-616. At Ser-617 the chain carries Phosphoserine. Thr-626 carries the post-translational modification Phosphothreonine. The SEC7 domain maps to 654 to 785; the sequence is FNKKPKRGIQ…IIMLTTDLHS (132 aa). Phosphoserine is present on residues Ser-700, Ser-1511, Ser-1513, Ser-1514, Ser-1525, Ser-1528, Ser-1534, and Ser-1782. Polar residues predominate over residues 1514 to 1532; it reads SIDKNPSERGQSQLSNPTD. The interval 1514–1535 is disordered; sequence SIDKNPSERGQSQLSNPTDDSW.

In terms of assembly, homodimer. Interacts with ARFGEF1/BIG1; both proteins are probably part of the same or very similar macromolecular complexes. Interacts with PRKAR1A, PRKAR2A, PRKAR1B, PRKAR2B, PPP1CC, PDE3A, TNFRSF1A, MYCBP and EXOC7. Interacts with GABRB1, GABRB2 and GABRB3. Post-translationally, in vitro phosphorylated by PKA reducing its GEF activity and dephosphorylated by phosphatase PP1. As to expression, expressed in placenta, lung, heart, brain, kidney and pancreas.

It is found in the cytoplasm. The protein localises to the membrane. The protein resides in the golgi apparatus. Its subcellular location is the perinuclear region. It localises to the trans-Golgi network. It is found in the endosome. The protein localises to the cytoskeleton. The protein resides in the microtubule organizing center. Its subcellular location is the centrosome. It localises to the cell projection. It is found in the dendrite. The protein localises to the cytoplasmic vesicle. The protein resides in the synapse. Inhibited by brefeldin A. Its function is as follows. Promotes guanine-nucleotide exchange on ARF1 and ARF3 and to a lower extent on ARF5 and ARF6. Promotes the activation of ARF1/ARF5/ARF6 through replacement of GDP with GTP. Involved in the regulation of Golgi vesicular transport. Required for the integrity of the endosomal compartment. Involved in trafficking from the trans-Golgi network (TGN) to endosomes and is required for membrane association of the AP-1 complex and GGA1. Seems to be involved in recycling of the transferrin receptor from recycling endosomes to the plasma membrane. Probably is involved in the exit of GABA(A) receptors from the endoplasmic reticulum. Involved in constitutive release of tumor necrosis factor receptor 1 via exosome-like vesicles; the function seems to involve PKA and specifically PRKAR2B. Proposed to act as A kinase-anchoring protein (AKAP) and may mediate crosstalk between Arf and PKA pathways. The polypeptide is Brefeldin A-inhibited guanine nucleotide-exchange protein 2 (ARFGEF2) (Homo sapiens (Human)).